The sequence spans 353 residues: uncharacterized protein (353 aa).

Residues 1–28 (MHLTIMRRFAVLLLLAIFLGGCSGSNGA) form the signal peptide.

This is an uncharacterized protein from Archaeoglobus fulgidus (strain ATCC 49558 / DSM 4304 / JCM 9628 / NBRC 100126 / VC-16).